A 244-amino-acid polypeptide reads, in one-letter code: NAD(P)H-quinone oxidoreductase subunit K (244 aa).

Residues Cys-60, Cys-61, Cys-125, and Cys-156 each contribute to the [4Fe-4S] cluster site. The segment covering 221–236 (SKKEKITELPENREQT) has biased composition (basic and acidic residues). The segment at 221–244 (SKKEKITELPENREQTEIINSEEE) is disordered.

It belongs to the complex I 20 kDa subunit family. In terms of assembly, NDH-1 can be composed of about 15 different subunits; different subcomplexes with different compositions have been identified which probably have different functions. Requires [4Fe-4S] cluster as cofactor.

It localises to the cellular thylakoid membrane. The catalysed reaction is a plastoquinone + NADH + (n+1) H(+)(in) = a plastoquinol + NAD(+) + n H(+)(out). The enzyme catalyses a plastoquinone + NADPH + (n+1) H(+)(in) = a plastoquinol + NADP(+) + n H(+)(out). Its function is as follows. NDH-1 shuttles electrons from an unknown electron donor, via FMN and iron-sulfur (Fe-S) centers, to quinones in the respiratory and/or the photosynthetic chain. The immediate electron acceptor for the enzyme in this species is believed to be plastoquinone. Couples the redox reaction to proton translocation, and thus conserves the redox energy in a proton gradient. Cyanobacterial NDH-1 also plays a role in inorganic carbon-concentration. In Prochlorococcus marinus (strain MIT 9312), this protein is NAD(P)H-quinone oxidoreductase subunit K.